The primary structure comprises 335 residues: MKPLAVTLGDPSGIGPEIVAKAWSRRKSDQIMPFFAIGSAASIQAVSSIPVVAITDPNEAISIFDQALPVWDIPSKETITPGKPNKAGAEVAFAALEKGVALVKQGQASALVTAPVSKAELYQVGFTFPGQTEFVANRCGIAADDAVMMLAGPDLRTVPLTIHIPYRDVLEQLTPKLIISRARVTVEDLKRNFAIPSPRLVVAGLNPHAGENGTIGREEIDSIEPAIRQLQAENIDIKGPFAADTLFSPRARATYDVALCPTHDQALIPIKTINFDNGVNTTLGLPIIRTSPDHGTAFPLAGKNKADEGAMVAALVMAANSAHNRQAYAQNSIDG.

T132 serves as a coordination point for substrate. Residues H163, H208, and H263 each coordinate a divalent metal cation. Positions 271, 280, and 289 each coordinate substrate.

This sequence belongs to the PdxA family. Homodimer. Requires Zn(2+) as cofactor. The cofactor is Mg(2+). Co(2+) is required as a cofactor.

The protein resides in the cytoplasm. The enzyme catalyses 4-(phosphooxy)-L-threonine + NAD(+) = 3-amino-2-oxopropyl phosphate + CO2 + NADH. The protein operates within cofactor biosynthesis; pyridoxine 5'-phosphate biosynthesis; pyridoxine 5'-phosphate from D-erythrose 4-phosphate: step 4/5. In terms of biological role, catalyzes the NAD(P)-dependent oxidation of 4-(phosphooxy)-L-threonine (HTP) into 2-amino-3-oxo-4-(phosphooxy)butyric acid which spontaneously decarboxylates to form 3-amino-2-oxopropyl phosphate (AHAP). The protein is 4-hydroxythreonine-4-phosphate dehydrogenase of Zymomonas mobilis subsp. mobilis (strain ATCC 31821 / ZM4 / CP4).